Reading from the N-terminus, the 390-residue chain is Chorismate synthase 2 (390 aa).

Arg-39 and Arg-45 together coordinate NADP(+). Residues 132-134 (RSS), 253-254 (NA), Gly-298, 313-317 (KPIPT), and Arg-339 each bind FMN.

The protein belongs to the chorismate synthase family. In terms of assembly, homotetramer. It depends on FMNH2 as a cofactor.

It carries out the reaction 5-O-(1-carboxyvinyl)-3-phosphoshikimate = chorismate + phosphate. The protein operates within metabolic intermediate biosynthesis; chorismate biosynthesis; chorismate from D-erythrose 4-phosphate and phosphoenolpyruvate: step 7/7. Functionally, catalyzes the anti-1,4-elimination of the C-3 phosphate and the C-6 proR hydrogen from 5-enolpyruvylshikimate-3-phosphate (EPSP) to yield chorismate, which is the branch point compound that serves as the starting substrate for the three terminal pathways of aromatic amino acid biosynthesis. This reaction introduces a second double bond into the aromatic ring system. The chain is Chorismate synthase 2 from Bacillus thuringiensis subsp. konkukian (strain 97-27).